We begin with the raw amino-acid sequence, 889 residues long: DNA mismatch repair protein MutS (889 aa).

Over residues 1-17 (MPKTNSSAASTNANPSS) the composition is skewed to low complexity. Residues 1–20 (MPKTNSSAASTNANPSSLQQ) form a disordered region. 640–647 (GPNMGGKS) contributes to the ATP binding site.

Belongs to the DNA mismatch repair MutS family.

In terms of biological role, this protein is involved in the repair of mismatches in DNA. It is possible that it carries out the mismatch recognition step. This protein has a weak ATPase activity. The protein is DNA mismatch repair protein MutS of Pseudoalteromonas atlantica (strain T6c / ATCC BAA-1087).